A 441-amino-acid polypeptide reads, in one-letter code: Glutamate-1-semialdehyde 2,1-aminomutase (441 aa).

Lys-270 carries the N6-(pyridoxal phosphate)lysine modification.

Belongs to the class-III pyridoxal-phosphate-dependent aminotransferase family. HemL subfamily. In terms of assembly, homodimer. Pyridoxal 5'-phosphate is required as a cofactor.

It localises to the cytoplasm. It carries out the reaction (S)-4-amino-5-oxopentanoate = 5-aminolevulinate. It functions in the pathway porphyrin-containing compound metabolism; protoporphyrin-IX biosynthesis; 5-aminolevulinate from L-glutamyl-tRNA(Glu): step 2/2. In Propionibacterium freudenreichii subsp. freudenreichii, this protein is Glutamate-1-semialdehyde 2,1-aminomutase (hemL).